The chain runs to 348 residues: S-adenosyl-L-methionine-dependent methyl transferase PigF (348 aa).

Glu199 serves as a coordination point for S-adenosyl-L-methionine. His247 (proton acceptor) is an active-site residue.

Belongs to the class I-like SAM-binding methyltransferase superfamily. Cation-independent O-methyltransferase family.

The protein operates within antibiotic biosynthesis; prodigiosin biosynthesis. Its function is as follows. Involved in the biosynthesis of 4-methoxy-2,2'-bipyrrole-5-carbaldehyde (MBC), one of the terminal products involved in the biosynthesis of the red antibiotic prodigiosin (Pig). Catalyzes the transfer of a methyl group from S-adenosyl-L-methionine (SAM) to the hydroxyl group of 4-hydroxy-2,2'-bipyrrole-5-carbaldehyde (HBC) to yield 4-methoxy-2,2'-bipyrrole-5-carbaldehyde (MBC). The protein is S-adenosyl-L-methionine-dependent methyl transferase PigF of Serratia sp. (strain ATCC 39006) (Prodigiosinella confusarubida).